Here is a 227-residue protein sequence, read N- to C-terminus: tRNA (guanine-N(7)-)-methyltransferase (227 aa).

The S-adenosyl-L-methionine site is built by Glu60, Glu85, Asp112, and Asp135. Asp135 is a catalytic residue. Substrate contacts are provided by residues Lys139, Asp171, and 206–209 (TKFE).

It belongs to the class I-like SAM-binding methyltransferase superfamily. TrmB family.

It catalyses the reaction guanosine(46) in tRNA + S-adenosyl-L-methionine = N(7)-methylguanosine(46) in tRNA + S-adenosyl-L-homocysteine. The protein operates within tRNA modification; N(7)-methylguanine-tRNA biosynthesis. Catalyzes the formation of N(7)-methylguanine at position 46 (m7G46) in tRNA. This is tRNA (guanine-N(7)-)-methyltransferase from Thiobacillus denitrificans (strain ATCC 25259 / T1).